The chain runs to 394 residues: Flavohemoprotein (394 aa).

The 136-residue stretch at 1–136 (MISQQTIDIV…LANVFITREE (136 aa)) folds into the Globin domain. H85 provides a ligand contact to heme b. Active-site charge relay system residues include Y95 and E135. Positions 147–394 (GGWRGTREFT…YECFGPHKVL (248 aa)) are reductase. An FAD-binding FR-type domain is found at 150–255 (RGTREFTLIE…AAPAGDFFLD (106 aa)). FAD-binding positions include Y188 and 204 to 207 (RQYS). Position 268–273 (268–273 (GVGLTP)) interacts with NADP(+). 387-390 (CFGP) is a binding site for FAD.

Belongs to the globin family. Two-domain flavohemoproteins subfamily. This sequence in the C-terminal section; belongs to the flavoprotein pyridine nucleotide cytochrome reductase family. The cofactor is heme b. FAD serves as cofactor.

It catalyses the reaction 2 nitric oxide + NADPH + 2 O2 = 2 nitrate + NADP(+) + H(+). The catalysed reaction is 2 nitric oxide + NADH + 2 O2 = 2 nitrate + NAD(+) + H(+). Functionally, is involved in NO detoxification in an aerobic process, termed nitric oxide dioxygenase (NOD) reaction that utilizes O(2) and NAD(P)H to convert NO to nitrate, which protects the bacterium from various noxious nitrogen compounds. Therefore, plays a central role in the inducible response to nitrosative stress. The protein is Flavohemoprotein of Photobacterium profundum (strain SS9).